The primary structure comprises 246 residues: Nuclear transcription factor Y subunit C-2 (246 aa).

Disordered regions lie at residues methionine 1–histidine 35 and glutamine 205–glutamate 246. A compositionally biased stretch (low complexity) spans alanine 9 to valine 21.

The protein belongs to the NFYC/HAP5 subunit family. Heterotrimeric transcription factor composed of three components, NF-YA, NF-YB and NF-YC. NF-YB and NF-YC must interact and dimerize for NF-YA association and DNA binding. Interacts with NFYB8, NFYB10 and HD5/NFYB11.

It is found in the nucleus. Its subcellular location is the cytoplasm. Functionally, probable transcription factor involved in the regulation of flowering time under long day (LD) conditions. Functions as a repressor of flowering, independently of HD1 and GHD7. Controls flowering time by negatively regulating the expression of EHD1 and HD3A. Component of the NF-Y/HAP transcription factor complex. In Oryza sativa subsp. japonica (Rice), this protein is Nuclear transcription factor Y subunit C-2.